We begin with the raw amino-acid sequence, 643 residues long: MNANPKFLSADAHVDEAAVAPLPNSRKVYVTGSRPDIRVPMREISQADTPDSFGGEKNPPVFVYDTSGPYSDPEARIDIRAGLPALRQAWIEERGDTEALTGLSSDFGRERAADTATADLRFQGLHRTPRRAIAGKNVSQMHYARKGIITPEMEYIAIRENQRRAEYLESLKTSGPNGEKLAAMMGRQHPGQAFGASAFGPNGLTEITPEFVREEVARGRAIIPNNINHPESEPMIIGRNFLVKVNANIGNSAVTSSIGEEVDKMTWAIRWGGDTVMDLSTGKHIHETREWIIRNSPVPIGTVPIYQALEKVNGKAEDLTWEIFRDTLIEQAEQGVDYFTIHAGVRLQYVPLTAKRMTGIVSRGGSIMAKWCLAHHKESFLYEHFEDICEIMKAYDVAFSLGDGLRPGSIYDANDEAQLGELKTLGELTQIAWKHDVQTMIEGPGHVPMQLIKENMDLQLEWCDEAPFYTLGPLTTDIAPGYDHITSGIGAAMIGWFGTAMLCYVTPKEHLGLPNKDDVKTGIITYKLAAHAADLAKGHPGAQVRDNALSKARFEFRWEDQFNLGLDPDKAREFHDETLPKDSAKVAHFCSMCGPHFCSMKITQDVREFAAQQGVTDDEALKKGMEVKSIEFMKKGAEIYQRQ.

Residues N248, M277, Y306, H342, 362-364 (SRG), 403-406 (DGLR), and E442 contribute to the substrate site. Residue H446 coordinates Zn(2+). Y469 lines the substrate pocket. H510 is a Zn(2+) binding site. [4Fe-4S] cluster-binding residues include C590, C593, and C598.

Belongs to the ThiC family. Homodimer. Requires [4Fe-4S] cluster as cofactor.

The enzyme catalyses 5-amino-1-(5-phospho-beta-D-ribosyl)imidazole + S-adenosyl-L-methionine = 4-amino-2-methyl-5-(phosphooxymethyl)pyrimidine + CO + 5'-deoxyadenosine + formate + L-methionine + 3 H(+). The protein operates within cofactor biosynthesis; thiamine diphosphate biosynthesis. Its function is as follows. Catalyzes the synthesis of the hydroxymethylpyrimidine phosphate (HMP-P) moiety of thiamine from aminoimidazole ribotide (AIR) in a radical S-adenosyl-L-methionine (SAM)-dependent reaction. This chain is Phosphomethylpyrimidine synthase, found in Paraburkholderia xenovorans (strain LB400).